The sequence spans 1392 residues: ATP-dependent helicase/nuclease subunit A (1392 aa).

The region spanning 4–595 is the UvrD-like helicase ATP-binding domain; the sequence is FKPTPAQSKA…IVLGENFRSM (592 aa). 25-32 is an ATP binding site; that stretch reads ASAGSGKT. The UvrD-like helicase C-terminal domain maps to 623-929; that stretch reads AHLKYAATYY…NVMTIHGSKG (307 aa).

This sequence belongs to the helicase family. AddA subfamily. In terms of assembly, heterodimer of AddA and AddB/RexB. Requires Mg(2+) as cofactor.

The catalysed reaction is Couples ATP hydrolysis with the unwinding of duplex DNA by translocating in the 3'-5' direction.. It catalyses the reaction ATP + H2O = ADP + phosphate + H(+). The heterodimer acts as both an ATP-dependent DNA helicase and an ATP-dependent, dual-direction single-stranded exonuclease. Recognizes the chi site generating a DNA molecule suitable for the initiation of homologous recombination. The AddA nuclease domain is required for chi fragment generation; this subunit has the helicase and 3' -&gt; 5' nuclease activities. The chain is ATP-dependent helicase/nuclease subunit A from Limosilactobacillus reuteri subsp. reuteri (strain JCM 1112) (Lactobacillus reuteri).